Reading from the N-terminus, the 416-residue chain is Argininosuccinate synthase (416 aa).

ATP is bound by residues 11 to 19 (AYSGGLDTS) and alanine 37. Tyrosine 88 provides a ligand contact to L-citrulline. 2 positions are modified to phosphotyrosine: tyrosine 88 and tyrosine 114. 116-124 (AHGATGKGN) contacts ATP. The L-aspartate site is built by threonine 120, asparagine 124, and aspartate 125. Asparagine 124 is an L-citrulline binding site. L-citrulline contacts are provided by arginine 128, serine 181, serine 190, glutamate 271, and tyrosine 283. At serine 181 the chain carries Phosphoserine.

The protein belongs to the argininosuccinate synthase family. As to quaternary structure, homotetramer.

It localises to the cytoplasm. Its subcellular location is the cytosol. The enzyme catalyses L-citrulline + L-aspartate + ATP = 2-(N(omega)-L-arginino)succinate + AMP + diphosphate + H(+). It functions in the pathway amino-acid biosynthesis; L-arginine biosynthesis; L-arginine from L-ornithine and carbamoyl phosphate: step 2/3. It participates in nitrogen metabolism; urea cycle; (N(omega)-L-arginino)succinate from L-aspartate and L-citrulline: step 1/1. In terms of biological role, one of the enzymes of the urea cycle, the metabolic pathway transforming neurotoxic amonia produced by protein catabolism into inocuous urea in the liver of ureotelic animals. Catalyzes the formation of arginosuccinate from aspartate, citrulline and ATP and together with ASL it is responsible for the biosynthesis of arginine in most body tissues. This Gallus gallus (Chicken) protein is Argininosuccinate synthase.